The following is a 256-amino-acid chain: Imidazole glycerol phosphate synthase subunit HisF (256 aa).

Residues Asp12 and Asp131 contribute to the active site.

This sequence belongs to the HisA/HisF family. Heterodimer of HisH and HisF.

Its subcellular location is the cytoplasm. It carries out the reaction 5-[(5-phospho-1-deoxy-D-ribulos-1-ylimino)methylamino]-1-(5-phospho-beta-D-ribosyl)imidazole-4-carboxamide + L-glutamine = D-erythro-1-(imidazol-4-yl)glycerol 3-phosphate + 5-amino-1-(5-phospho-beta-D-ribosyl)imidazole-4-carboxamide + L-glutamate + H(+). It functions in the pathway amino-acid biosynthesis; L-histidine biosynthesis; L-histidine from 5-phospho-alpha-D-ribose 1-diphosphate: step 5/9. In terms of biological role, IGPS catalyzes the conversion of PRFAR and glutamine to IGP, AICAR and glutamate. The HisF subunit catalyzes the cyclization activity that produces IGP and AICAR from PRFAR using the ammonia provided by the HisH subunit. The polypeptide is Imidazole glycerol phosphate synthase subunit HisF (Pseudomonas syringae pv. syringae (strain B728a)).